The primary structure comprises 362 residues: UDP-N-acetylglucosamine--N-acetylmuramyl-(pentapeptide) pyrophosphoryl-undecaprenol N-acetylglucosamine transferase (362 aa).

Residues 10–12, N124, S194, I249, and Q294 contribute to the UDP-N-acetyl-alpha-D-glucosamine site; that span reads TGG.

Belongs to the glycosyltransferase 28 family. MurG subfamily.

Its subcellular location is the cell membrane. The catalysed reaction is Mur2Ac(oyl-L-Ala-gamma-D-Glu-L-Lys-D-Ala-D-Ala)-di-trans,octa-cis-undecaprenyl diphosphate + UDP-N-acetyl-alpha-D-glucosamine = beta-D-GlcNAc-(1-&gt;4)-Mur2Ac(oyl-L-Ala-gamma-D-Glu-L-Lys-D-Ala-D-Ala)-di-trans,octa-cis-undecaprenyl diphosphate + UDP + H(+). Its pathway is cell wall biogenesis; peptidoglycan biosynthesis. Its function is as follows. Cell wall formation. Catalyzes the transfer of a GlcNAc subunit on undecaprenyl-pyrophosphoryl-MurNAc-pentapeptide (lipid intermediate I) to form undecaprenyl-pyrophosphoryl-MurNAc-(pentapeptide)GlcNAc (lipid intermediate II). This is UDP-N-acetylglucosamine--N-acetylmuramyl-(pentapeptide) pyrophosphoryl-undecaprenol N-acetylglucosamine transferase from Pediococcus pentosaceus (strain ATCC 25745 / CCUG 21536 / LMG 10740 / 183-1w).